A 720-amino-acid chain; its full sequence is Cyclopenase penL (720 aa).

Positions 137, 141, and 313 each coordinate Cu cation.

This sequence belongs to the tyrosinase family. It depends on Cu(2+) as a cofactor.

The enzyme catalyses (-)-cyclopenine = viridicatin + methyl isocyanate + H(+). The catalysed reaction is (-)-4'-methoxycyclopenine = 4'-methoxyviridicatin + methyl isocyanate + H(+). It functions in the pathway secondary metabolite biosynthesis. The protein operates within alkaloid biosynthesis. Its pathway is mycotoxin biosynthesis. In terms of biological role, cyclopenase; part of the gene cluster that mediates the biosynthesis of penigequinolones, potent insecticidal alkaloids that contain a highly modified 10-carbon prenyl group. The first stage is catalyzed by the nonribosomal peptide synthetase penN that condenses anthranilic acid and O-methyl-L-tyrosine to produce 4'-methoxycyclopeptin. 4'-methoxycyclopeptin is then converted to 4'-methoxydehydrocyclopeptin by the ketoglutarate-dependent dioxygenase penM through dehydrogenation to form a double bond between C-alpha and C-beta of the O-methyltyrosine side chain. PenM also converts its first product methoxydehydrocyclopeptin to 4'-methoxycyclopenin. The following conversion of 4'methoxycyclopenin into 4'-methoxyviridicatin is catalyzed by the cyclopenase penL. 4'-methoxyviridicatin is the precursor of quinolone natural products, and is further converted to quinolinone B. The prenyltransferase penI then catalyzes the canonical Friedel-Crafts alkylation of quinolinone B with dimethylallyl cation to yield dimethylallyl quinolone, which is subjected to FAD-dependent dehydrogenation by the FAD-linked oxidoreductase penH to yield conjugated aryl diene. The delta(3') double bond then serves as the site of the second alkylation with DMAPP catalyzed by the prenyltransferase penG to yield a carbenium ion intermediate, which can be attacked by H(2)O to yield a styrenyl quinolone containing a C3'-hydroxyprenyl chain, or undergo cyclization to yield yaequinolones J1 and J2. The conversion of the styrenyl quinolone into the tetrahydrofuran-containing yaequinolone C is performed by the FAD-dependent monooxygenase penE and involves epoxidation of the terminal C7'-C8' olefin, followed by epoxide ring opening initiated by the C3' hydroxyl group. The predicted cysteine hydrolase penJ acts as an epoxide hydrolase that enhances the rate of the 5-exo-tet cyclization step, increasing the yield of yaequinolone C. PenF catalyzes the cationic rearrangement of the epoxide formed by penE (before ring opening to produce yaequinolone C) into yaequinolone D. Finally, the short-chain dehydrogenase/reductase (SDR)-like reductase penD, catalyzes both the dehydration of yaequinolone D and the reduction of the resulting oxonium to yield penigequinolone. This is Cyclopenase penL from Penicillium thymicola.